An 89-amino-acid chain; its full sequence is Large ribosomal subunit protein bL27 (89 aa).

Residues 1–22 form a disordered region; sequence MAQKKAGGSSRNGRDSAGRRLG.

This sequence belongs to the bacterial ribosomal protein bL27 family.

This is Large ribosomal subunit protein bL27 from Gluconacetobacter diazotrophicus (strain ATCC 49037 / DSM 5601 / CCUG 37298 / CIP 103539 / LMG 7603 / PAl5).